Consider the following 375-residue polypeptide: MRIRPSPPKKPTPGLLHEYADRLVAFEYSASKGLKPHTLLFISGLGDGLGTVAYLEDIVAALEGSQWSVFSPVISSSYGGWGTSGLGRDTDEMARCIEYIQKYKEGSGVHETERKIVIMGHSTGSQDVLTYISSPNPRHPQPGLDPGHGHRHKRMPPLRPQVDGAIMQAPVSDRQAIQTVLEEGNERHSAKYMRKVVNDAIAYAKKHTYEDYDSLDTIIPLPITAAIGYPASTAVSSRRFLSLTSPDSPDSPGEDDLFSSDLTDERLRKTFGMVRHRGVLKDQKGLLVLYSGNDPSVPAFVDKEGLLRRWRWATDADEKRAYWHGESGIIPGATHTLEGPGQVEQRKELVRRVWMFLADVEGDPRTSCHSARPLS.

Residues 138–158 (RHPQPGLDPGHGHRHKRMPPL) are disordered.

It belongs to the sidJ hydrolase family. Homodimer.

It participates in secondary metabolite biosynthesis. Esterase; part of a cluster that mediates the biosynthesis of a yet undetermined secondary metabolite. With the HR-PKS AN6791, produces a pathway intermediate compound with molecular weight 258. The polypeptide is Esterase AN6793 (Emericella nidulans (strain FGSC A4 / ATCC 38163 / CBS 112.46 / NRRL 194 / M139) (Aspergillus nidulans)).